The sequence spans 3748 residues: Intermembrane lipid transfer protein VPS13C (3748 aa).

Positions 3-115 (LESVVADLLN…SLQDIKQKEL (113 aa)) constitute a Chorein N-terminal domain. Serine 132 is modified (phosphoserine). Threonine 613 bears the Phosphothreonine mark. Residue serine 618 is modified to Phosphoserine. Threonine 623 is subject to Phosphothreonine. Phosphoserine is present on residues serine 736, serine 841, serine 871, and serine 873. Positions 876 to 882 (EFFDAED) match the FFAT motif. Phosphothreonine is present on threonine 1968. Phosphoserine is present on residues serine 1974 and serine 2442. The tract at residues 2410–3304 (DYSLKDRAPF…IQQDIDALNT (895 aa)) is required for late endosome/lysosome localization. In terms of domain architecture, SHR-BD spans 2760–3012 (ELSVFSPYWL…LFAWADPTGI (253 aa)). The tract at residues 3305–3748 (ELMESSMTDM…VKLLRPQGPS (444 aa)) is required for lipid droplet localization. 2 positions are modified to omega-N-methylarginine: arginine 3514 and arginine 3521. Lysine 3533 bears the N6-acetyllysine mark.

The protein belongs to the VPS13 family.

The protein resides in the mitochondrion outer membrane. The protein localises to the lipid droplet. It localises to the endoplasmic reticulum membrane. It is found in the lysosome membrane. Its subcellular location is the late endosome membrane. Functionally, mediates the transfer of lipids between membranes at organelle contact sites. Necessary for proper mitochondrial function and maintenance of mitochondrial transmembrane potential. Involved in the regulation of PINK1/PRKN-mediated mitophagy in response to mitochondrial depolarization. The sequence is that of Intermembrane lipid transfer protein VPS13C from Mus musculus (Mouse).